Reading from the N-terminus, the 314-residue chain is uncharacterized protein (314 aa).

It to M.leprae ML0607.

This is an uncharacterized protein from Mycobacterium bovis (strain ATCC BAA-935 / AF2122/97).